A 37-amino-acid polypeptide reads, in one-letter code: Fructose-bisphosphate aldolase A (37 aa).

The protein belongs to the class I fructose-bisphosphate aldolase family. In terms of assembly, tetramer.

The catalysed reaction is beta-D-fructose 1,6-bisphosphate = D-glyceraldehyde 3-phosphate + dihydroxyacetone phosphate. The protein operates within carbohydrate degradation; glycolysis; D-glyceraldehyde 3-phosphate and glycerone phosphate from D-glucose: step 4/4. Plays a key role in glycolysis and gluconeogenesis. The polypeptide is Fructose-bisphosphate aldolase A (Thunnus albacares (Yellowfin tuna)).